The following is a 238-amino-acid chain: Laccase-S (238 aa).

Plastocyanin-like domains are found at residues 4–87 (NVIA…YDPA) and 100–238 (HTII…IARY). The N-linked (GlcNAc...) asparagine glycan is linked to Asn8. Residues His21, His23, His66, and His68 each coordinate Cu cation. Cys74 and Cys162 are joined by a disulfide. Residue Asn165 is glycosylated (N-linked (GlcNAc...) asparagine).

This sequence belongs to the multicopper oxidase family. Monomer. The cofactor is Cu cation.

It localises to the secreted. It catalyses the reaction 4 hydroquinone + O2 = 4 benzosemiquinone + 2 H2O. Its activity is regulated as follows. Activity is strongly promoted by toluene. Activity is promoted by magnesium, potassium, cadmium, zinc, nickel, sodium, lead and manganese ions. Completely inhibited by IAA (cysteine protease inhibitor), PMSF (serine protease inhibitor), DEP (histidine protease inhibitor) and NAI (tyrosine protease inhibitor). Inhibited by ethanol, acetone, SDS, and EDTA. Activity is strongly inhibited by mercury ions. Also inhibited by lithium, aluminum, calcium, barium and iron ions. Its function is as follows. Lignin degradation and detoxification of lignin-derived products. Has activity towards 2,2'-azino-bis(3-ethylbenzothiazoline-6-sulfonic acid) (ABTS). This Trametes hirsuta (White-rot fungus) protein is Laccase-S.